Here is a 285-residue protein sequence, read N- to C-terminus: Acetyl-coenzyme A carboxylase carboxyl transferase subunit beta 2 (285 aa).

The tract at residues 1 to 20 (MAIRSLFSGNRKKKEDGQEK) is disordered. Residues 26-285 (LMTKCPECRH…MHTKGGVQHV (260 aa)) enclose the CoA carboxyltransferase N-terminal domain. Zn(2+)-binding residues include Cys30, Cys33, Cys49, and Cys52. The C4-type zinc-finger motif lies at 30–52 (CPECRHIQLTKELEKNHKVCTKC).

The protein belongs to the AccD/PCCB family. As to quaternary structure, acetyl-CoA carboxylase is a heterohexamer composed of biotin carboxyl carrier protein (AccB), biotin carboxylase (AccC) and two subunits each of ACCase subunit alpha (AccA) and ACCase subunit beta (AccD). The cofactor is Zn(2+).

The protein resides in the cytoplasm. The enzyme catalyses N(6)-carboxybiotinyl-L-lysyl-[protein] + acetyl-CoA = N(6)-biotinyl-L-lysyl-[protein] + malonyl-CoA. It participates in lipid metabolism; malonyl-CoA biosynthesis; malonyl-CoA from acetyl-CoA: step 1/1. Its function is as follows. Component of the acetyl coenzyme A carboxylase (ACC) complex. Biotin carboxylase (BC) catalyzes the carboxylation of biotin on its carrier protein (BCCP) and then the CO(2) group is transferred by the transcarboxylase to acetyl-CoA to form malonyl-CoA. This chain is Acetyl-coenzyme A carboxylase carboxyl transferase subunit beta 2, found in Lysinibacillus sphaericus (strain C3-41).